A 426-amino-acid chain; its full sequence is Enolase (426 aa).

Q165 lines the (2R)-2-phosphoglycerate pocket. E209 functions as the Proton donor in the catalytic mechanism. Mg(2+) contacts are provided by D244, E287, and D313. Residues K338, R367, S368, and K389 each contribute to the (2R)-2-phosphoglycerate site. The active-site Proton acceptor is the K338.

It belongs to the enolase family. It depends on Mg(2+) as a cofactor.

The protein resides in the cytoplasm. It is found in the secreted. The protein localises to the cell surface. It carries out the reaction (2R)-2-phosphoglycerate = phosphoenolpyruvate + H2O. It participates in carbohydrate degradation; glycolysis; pyruvate from D-glyceraldehyde 3-phosphate: step 4/5. Its function is as follows. Catalyzes the reversible conversion of 2-phosphoglycerate (2-PG) into phosphoenolpyruvate (PEP). It is essential for the degradation of carbohydrates via glycolysis. The chain is Enolase from Methanococcus maripaludis (strain C7 / ATCC BAA-1331).